The chain runs to 482 residues: Histone deacetylase 1 (482 aa).

Residues arginine 9–aspartate 321 are histone deacetylase. Residues glycine 27 and lysine 31 each contribute to the 1D-myo-inositol 1,4,5,6-tetrakisphosphate site. Lysine 74 bears the N6-acetyllysine; alternate mark. A Glycyl lysine isopeptide (Lys-Gly) (interchain with G-Cter in SUMO2); alternate cross-link involves residue lysine 74. The active site involves histidine 141. Residues aspartate 176 and histidine 178 each coordinate Zn(2+). At lysine 220 the chain carries N6-acetyllysine. An S-nitrosocysteine modification is found at cysteine 261. Aspartate 264 contacts Zn(2+). Arginine 270 serves as a coordination point for 1D-myo-inositol 1,4,5,6-tetrakisphosphate. The residue at position 273 (cysteine 273) is an S-nitrosocysteine. The segment covering proline 390–aspartate 400 has biased composition (acidic residues). The interval proline 390–alanine 482 is disordered. Serine 393, serine 406, serine 409, serine 421, and serine 423 each carry phosphoserine. Over residues proline 401 to cysteine 416 the composition is skewed to basic and acidic residues. The segment covering glutamate 417–glycine 427 has biased composition (acidic residues). Lysine 432 carries the post-translational modification N6-methylated lysine; by EHMT2. Lysine 438 is covalently cross-linked (Glycyl lysine isopeptide (Lys-Gly) (interchain with G-Cter in SUMO2)). Residues valine 443–alanine 482 show a composition bias toward basic and acidic residues. Lysine 444 participates in a covalent cross-link: Glycyl lysine isopeptide (Lys-Gly) (interchain with G-Cter in SUMO2); alternate. Lysine 444 is covalently cross-linked (Glycyl lysine isopeptide (Lys-Gly) (interchain with G-Cter in SUMO); alternate). Glycyl lysine isopeptide (Lys-Gly) (interchain with G-Cter in SUMO2) cross-links involve residues lysine 456, lysine 457, and lysine 473. A Glycyl lysine isopeptide (Lys-Gly) (interchain with G-Cter in SUMO2); alternate cross-link involves residue lysine 476. A Glycyl lysine isopeptide (Lys-Gly) (interchain with G-Cter in SUMO); alternate cross-link involves residue lysine 476. Lysine 480 is covalently cross-linked (Glycyl lysine isopeptide (Lys-Gly) (interchain with G-Cter in SUMO2)).

The protein belongs to the histone deacetylase family. HD type 1 subfamily. As to quaternary structure, part of the core histone deacetylase (HDAC) complex composed of HDAC1, HDAC2, RBBP4 and RBBP7, the core complex associates with SIN3, SAP18 and SAP30 to form the SIN3 HDAC complex. Component of the nucleosome remodeling and deacetylase (NuRD) repressor complex, composed of core proteins MTA1, MTA2, MTA3, RBBP4, RBBP7, HDAC1, HDAC2, MBD2, MBD3, and peripherally associated proteins CDK2AP1, CDK2AP2, GATAD2A, GATAD2B, CHD3, CHD4 and CHD5. The exact stoichiometry of the NuRD complex is unknown, and some subunits such as MBD2 and MBD3, GATAD2A and GATAD2B, and CHD3, CHD4 and CHD5 define mutually exclusive NuRD complexes. Component of a BHC histone deacetylase complex that contains HDAC1, HDAC2, HMG20B/BRAF35, KDM1A, RCOR1/CoREST and PHF21A/BHC80. The BHC complex may also contain ZMYM2, ZNF217, ZMYM3, GSE1 and GTF2I. Component of a mSin3A corepressor complex that contains SIN3A, SAP130, SUDS3/SAP45, ARID4B/SAP180, HDAC1 and HDAC2. Found in a trimeric complex with APBB1 and TSHZ3; the interaction between HDAC1 and APBB1 is mediated by TSHZ3. Forms a complex comprising APPL1, RUVBL2, APPL2, CTNNB1 and HDAC2. Component of a RCOR/GFI/KDM1A/HDAC complex. Part of a complex composed of TRIM28, HDAC1, HDAC2 and EHMT2. Part of a complex containing at least CDYL, MIER1, MIER2, HDAC1 and HDAC2. The large PER complex involved in the histone deacetylation is composed of at least HDAC1, PER2, SFPQ and SIN3A. Associates with the 9-1-1 complex; interacts with HUS1. Found in a complex with DNMT3A and HDAC7. Found in a complex with YY1, SIN3A and GON4L. Identified in a histone deacetylase complex that contains DNTTIP1, HDAC1 and MIDEAS; this complex assembles into a tetramer that contains four copies of each protein chain. Found in a complex composed of at least SINHCAF, SIN3A, HDAC1, SAP30, RBBP4, OGT and TET1. Component of the SIN3B complex, which includes SIN3B, HDAC1, PHF12 and MORF4L1. Interacts with GFI1; the interaction is direct. Interacts directly with GFI1B. Interacts with TSHZ3 (via N-terminus); the interaction is direct. Interacts with APEX1; the interaction is not dependent on the acetylated status of APEX1. Interacts with BANP. Interacts with BAZ2A/TIP5. Interacts with BCL6. Interacts with BCOR. Interacts with BHLHE40/DEC1. Interacts with BRCC3; this interaction is enhanced in the presence of PWWP2B. Interacts with BRMS1. Interacts with BRMS1L. Interacts with C10orf90/FATS (via its N-terminal); the interaction prevents binding of HDAC1 to CDKN1A/p21 and facilitates the acetylation and stabilization of CDKN1A/p21. Interacts with CBFA2T3. Interacts with CCAR2. Interacts with CDK2AP1. Interacts with CHD3. Interacts with CHD4. Interacts with CHFR. Interacts with CIART. Interacts with CDKN1A/p21. Interacts with CDK5 complexed to CDK5R1 (p25). Interacts with CRY1. Interacts with DAXX. Interacts with DDIT3/CHOP. Interacts with DDX5. Interacts with DHX36; this interaction occurs in a RNA-dependent manner. Interacts with DNMT1. Interacts with DNTTIP1. Interacts with E4F1. Interacts with EP300. Interacts with ERCC6. Interacts with GATAD2A. Interacts with HCFC1. Interacts with HDAC9. Interacts with HUS1. Interacts with INSM1. Interacts with KDM4A. Interacts with KDM5A; this interaction impairs histone deacetylation. Interacts with KDM5B. Interacts with KLF1. Interacts with MBD3L2. Interacts with MIER1. Interacts with NFE4. Interacts with NR4A2/NURR1. Interacts with NR1D2 (via C-terminus). Interacts with NRIP1. Interacts with NSD2. Interacts with PACS2. Interacts with PHB2. Interacts with PPHLN1. Interacts with PRDM6. Interacts with PRDM16. Interacts with PWWP2A in a MTA1-dependent manner. Interacts with PWWP2B. Interacts with RB1. Interacts with RERE. Interacts with SANBR (via the BTB domain). Interacts with SAMSN1. Interacts with SAP30L. Interacts with SETDB1. Interacts with SIN3A. Interacts with SMAD3. Interacts with SMAD4; positively regulated by ZBTB7A. Interacts with SMARCAD1. Interacts with SMARCA4/BRG1. Interacts with SMYD2. Interacts with SMYD4 (via MYND-type zinc finger). Interacts with SP1; the interaction deacetylates SP1 and regulates its transcriptional activity. Interacts with SP3; the interaction deacetylates SP3 and regulates its transcriptional activity. In vitro, C(18) ceramides increase this interaction and the subsequent SP3 deacetylation and SP3-mediated repression of the TERT promoter. Interacts with SPEN/MINT. Interacts with SPHK2. Interacts with SUV39H1. Interacts with TGIF. Interacts with TGIF2. Interacts with TRAF6. Interacts with TRIM28; the interaction recruits HDAC1 to E2F1 and inhibits its acetylation. Interacts with TSC22D3 isoform 1; this interaction affects HDAC1 activity on MYOG promoter and thus inhibits MYOD1 transcriptional activity. Interacts with UHRF1. Interacts with UHRF2. Interacts with ZBTB7A. Interacts with ZMYND8. Interacts with ZMYND15. Interacts with ZNF431. Interacts with ZNF516; this interaction is enhanced in the presence of PWWP2B. Interacts with ZNF541. Interacts with ZNF638. Interacts with ZNHIT1. Interacts with the non-histone region of MACROH2A1. Identified in a complex with HDAC2, KCTD19, DNTTIP1 and ZNF541. Interacts with MSX3. Interacts with VRK1. Requires Zn(2+) as cofactor. Post-translationally, sumoylated on Lys-444 and Lys-476; which promotes enzymatic activity. Desumoylated by SENP1. Phosphorylation on Ser-421 and Ser-423 promotes enzymatic activity and interactions with NuRD and SIN3 complexes. Phosphorylated by CDK5. In terms of processing, ubiquitinated by CHFR and KCTD11, leading to its degradation by the proteasome.

The protein resides in the nucleus. It catalyses the reaction N(6)-acetyl-L-lysyl-[histone] + H2O = L-lysyl-[histone] + acetate. The catalysed reaction is N(6)-acetyl-L-lysyl-[protein] + H2O = L-lysyl-[protein] + acetate. The enzyme catalyses N(6)-(2E)-butenoyl-L-lysyl-[protein] + H2O = (2E)-2-butenoate + L-lysyl-[protein]. It carries out the reaction N(6)-[(S)-lactoyl]-L-lysyl-[protein] + H2O = (S)-lactate + L-lysyl-[protein]. Inositol tetraphosphate (1D-myo-inositol 1,4,5,6-tetrakisphosphate) may act as an intermolecular glue between HDAC1 and N-Cor repressor complex components. Histone deacetylase that catalyzes the deacetylation of lysine residues on the N-terminal part of the core histones (H2A, H2B, H3 and H4). Histone deacetylation gives a tag for epigenetic repression and plays an important role in transcriptional regulation, cell cycle progression and developmental events. Histone deacetylases act via the formation of large multiprotein complexes. Acts as a component of the histone deacetylase NuRD complex which participates in the remodeling of chromatin. As part of the SIN3B complex is recruited downstream of the constitutively active genes transcriptional start sites through interaction with histones and mitigates histone acetylation and RNA polymerase II progression within transcribed regions contributing to the regulation of transcription. Also functions as a deacetylase for non-histone targets, such as NR1D2, RELA, SP1, SP3, STAT3 and TSHZ3. Deacetylates SP proteins, SP1 and SP3, and regulates their function. Component of the BRG1-RB1-HDAC1 complex, which negatively regulates the CREST-mediated transcription in resting neurons. Upon calcium stimulation, HDAC1 is released from the complex and CREBBP is recruited, which facilitates transcriptional activation. Deacetylates TSHZ3 and regulates its transcriptional repressor activity. Deacetylates 'Lys-310' in RELA and thereby inhibits the transcriptional activity of NF-kappa-B. Deacetylates NR1D2 and abrogates the effect of KAT5-mediated relieving of NR1D2 transcription repression activity. Component of a RCOR/GFI/KDM1A/HDAC complex that suppresses, via histone deacetylase (HDAC) recruitment, a number of genes implicated in multilineage blood cell development. Involved in CIART-mediated transcriptional repression of the circadian transcriptional activator: CLOCK-BMAL1 heterodimer. Required for the transcriptional repression of circadian target genes, such as PER1, mediated by the large PER complex or CRY1 through histone deacetylation. In addition to protein deacetylase activity, also has protein-lysine deacylase activity: acts as a protein decrotonylase and delactylase by mediating decrotonylation ((2E)-butenoyl) and delactylation (lactoyl) of histones, respectively. This chain is Histone deacetylase 1 (Hdac1), found in Rattus norvegicus (Rat).